Consider the following 156-residue polypeptide: Nascent polypeptide-associated complex subunit beta (156 aa).

Disordered stretches follow at residues Met1 to Thr42 and Gln129 to Glu156. An NAC-A/B domain is found at Asn38–Phe103.

It belongs to the NAC-beta family. In terms of assembly, part of the nascent polypeptide-associated complex (NAC), consisting of EGD2 and EGD1. NAC associates with ribosomes via EGD1.

The protein localises to the cytoplasm. It localises to the nucleus. Its function is as follows. Component of the nascent polypeptide-associated complex (NAC), a dynamic component of the ribosomal exit tunnel, protecting the emerging polypeptides from interaction with other cytoplasmic proteins to ensure appropriate nascent protein targeting. The NAC complex also promotes mitochondrial protein import by enhancing productive ribosome interactions with the outer mitochondrial membrane and blocks the inappropriate interaction of ribosomes translating non-secretory nascent polypeptides with translocation sites in the membrane of the endoplasmic reticulum. EGD1 may act as a transcription factor that exert a negative effect on the expression of several genes that are transcribed by RNA polymerase II. In Candida glabrata (strain ATCC 2001 / BCRC 20586 / JCM 3761 / NBRC 0622 / NRRL Y-65 / CBS 138) (Yeast), this protein is Nascent polypeptide-associated complex subunit beta (EGD1).